Reading from the N-terminus, the 341-residue chain is MINLQDVSKVYKSKHGDVNAVQNVSLSIKKGEIFGIIGYSGAGKSSLIRLLNGLEKPTSGTVEVAGTKINEVNGRGLRKARHEISMIFQHFNLLWSRTVRDNIMFPLEIAGVKKSERIKRANELIKLVGLEGKEKSYPSQLSGGQKQRVGIARALANNPKVLLCDEATSALDPQTTDSILDLLSDINERLGLTIVLITHEMHVIRKICNRVAVMENGKVVEEGEVLDVFKNPKEQMTKRFVQQVTEPEETKETLQHLLDDTASGKMVQLTFVGESAEQPLITEMIRNFNVSVNILQGKISQTKDGAYGSLFIHIDGDEEEVQNVIRFINDKQVKAEVITNV.

An ABC transporter domain is found at Ile2 to Val241. Gly38 to Ser45 serves as a coordination point for ATP.

The protein belongs to the ABC transporter superfamily. Methionine importer (TC 3.A.1.24) family. In terms of assembly, the complex is composed of two ATP-binding proteins (MetN), two transmembrane proteins (MetP) and a solute-binding protein (MetQ).

The protein resides in the cell membrane. It carries out the reaction L-methionine(out) + ATP + H2O = L-methionine(in) + ADP + phosphate + H(+). The catalysed reaction is D-methionine(out) + ATP + H2O = D-methionine(in) + ADP + phosphate + H(+). Its function is as follows. Part of the ABC transporter complex MetNPQ involved in methionine import. Responsible for energy coupling to the transport system. It has also been shown to be involved in methionine sulfoxide transport. The sequence is that of Methionine import ATP-binding protein MetN from Bacillus subtilis (strain 168).